The primary structure comprises 92 residues: Small ribosomal subunit protein uS19c (92 aa).

The protein belongs to the universal ribosomal protein uS19 family.

The protein resides in the plastid. It is found in the chloroplast. In terms of biological role, protein S19 forms a complex with S13 that binds strongly to the 16S ribosomal RNA. The chain is Small ribosomal subunit protein uS19c from Platanus occidentalis (Sycamore).